The following is a 105-amino-acid chain: Prothymosin alpha-A (105 aa).

A compositionally biased stretch (basic and acidic residues) spans 1-30 (MADTKVDTSKEVSAKDLKEKKQVEEAENGK). Residues 1 to 105 (MADTKVDTSK…VDPKKQKTDV (105 aa)) are disordered. 2 stretches are compositionally biased toward acidic residues: residues 39-78 (ENEE…EEAE) and 87-96 (EDDDDDEDDV).

This sequence belongs to the pro/parathymosin family. At the 20-somite stage (18 hpf), expressed on the dorsal side of the embryo in the developing central and peripheral nervous system (CNS and PNS), in the tail bud and the pronephric ducts. In the PNS, expressed in the otic vesicle, trigeminal ganglion and the anterior lateral line placode. Localized throughout the hindbrain, with highest expression in rhombomeres 3 and 4. In the head, expressed in the olfactory placode and in the diencephalic region. At the end of the segmentation period (20 hpf), expression begins in the newly forming endodermal pouches, and weakly in the pharyngeal arch precursor cells. During the early pharyngula period, expressed in the pectoral fin bud, the developing retina, and still present in the central nervous system and endodermal pouches. In the tail, expressed in the spinal cord and posterior lateral line precursors. Weakly expressed in the pronephric ducts, only in the corpuscles of Stanius. At 48 hpf, still expressed in the retina and brain, where expression is almost uniform. At this stage, expression is decreased in the spinal cord and is absent from the lateral line cells and pronephric ducts, but appears in the intestine and continues in the pharyngeal arches. In 72 hpf embryos, expression in the brain remains uniform but is restricted to amacrine cells in the retina. In the pharyngeal arches, expression continues to be limited to the ectodermal and endodermal covering cells.

The protein localises to the nucleus. This Danio rerio (Zebrafish) protein is Prothymosin alpha-A (ptmaa).